The primary structure comprises 121 residues: Fluoride-specific ion channel FluC 1 (121 aa).

Transmembrane regions (helical) follow at residues 3–23 (YVYI…ISFL), 35–55 (VANL…IAFF), 64–84 (AITT…LELI), and 92–112 (FITL…LCYV). Na(+) contacts are provided by Gly-71 and Thr-74.

The protein belongs to the fluoride channel Fluc/FEX (TC 1.A.43) family.

It localises to the cell membrane. The enzyme catalyses fluoride(in) = fluoride(out). Na(+) is not transported, but it plays an essential structural role and its presence is essential for fluoride channel function. Its function is as follows. Fluoride-specific ion channel. Important for reducing fluoride concentration in the cell, thus reducing its toxicity. This is Fluoride-specific ion channel FluC 1 from Staphylococcus aureus (strain bovine RF122 / ET3-1).